The chain runs to 258 residues: Alcohol dehydrogenase 2 (258 aa).

Residue 9–33 (IFVGGLGFIGYEACKQLMAKNMASF) coordinates NAD(+). Position 137 (Ser-137) interacts with substrate. Residue Tyr-150 is the Proton acceptor of the active site.

Belongs to the short-chain dehydrogenases/reductases (SDR) family. Homodimer.

It carries out the reaction a primary alcohol + NAD(+) = an aldehyde + NADH + H(+). The enzyme catalyses a secondary alcohol + NAD(+) = a ketone + NADH + H(+). This Ceratitis capitata (Mediterranean fruit fly) protein is Alcohol dehydrogenase 2 (ADH2).